The sequence spans 21 residues: Cupiennin-6d (21 aa).

Ser-21 is subject to Serine amide.

Expressed by the venom gland.

It is found in the secreted. This chain is Cupiennin-6d, found in Cupiennius salei (American wandering spider).